A 192-amino-acid polypeptide reads, in one-letter code: Ion-translocating oxidoreductase complex subunit A (192 aa).

6 helical membrane passes run 5 to 25, 39 to 59, 67 to 87, 102 to 122, 134 to 154, and 171 to 191; these read VLLL…FLGL, IGMG…AYLV, LGIE…VVQF, LLGI…VALL, IIYG…FASM, and SIAM…TGLV.

The protein belongs to the NqrDE/RnfAE family. In terms of assembly, the complex is composed of six subunits: RnfA, RnfB, RnfC, RnfD, RnfE and RnfG.

The protein resides in the cell inner membrane. In terms of biological role, part of a membrane-bound complex that couples electron transfer with translocation of ions across the membrane. This is Ion-translocating oxidoreductase complex subunit A from Vibrio parahaemolyticus serotype O3:K6 (strain RIMD 2210633).